Consider the following 369-residue polypeptide: Cyclic AMP receptor-like protein A (369 aa).

Topologically, residues 1-4 (MIQI) are extracellular. The chain crosses the membrane as a helical span at residues 5-22 (LLSTFISFIIIIVSSNDI). The Cytoplasmic segment spans residues 23 to 72 (RSGENDNFNNNKMINNFLTTITTNDTIIIKETESPNDYDFSKEQIESLDK). Residues 73–93 (IVYFSSTMGIVGALFIIVSFF) traverse the membrane as a helical segment. Over 94-100 (LFKAART) the chain is Extracellular. A helical membrane pass occupies residues 101-121 (FATKMIFFLSLSDLFAAIFYL). The Cytoplasmic segment spans residues 122–146 (PYYRDSDIMCNLQGMGLVFFLSSSY). Residues 147-167 (LWTMCISISLFMVFFTTIFEL) traverse the membrane as a helical segment. At 168–173 (NHWFKY) the chain is on the extracellular side. Residues 174–194 (FHFICWGIPLFTAIISLIFHA) traverse the membrane as a helical segment. The Cytoplasmic segment spans residues 195-212 (YGKTGSWCFISDPTSIFR). A helical membrane pass occupies residues 213–233 (LLYYLPLIVVFFINLVVFIAI). The Extracellular segment spans residues 234 to 247 (RWKISQHSNSLVSR). Residues 248 to 268 (VNIIVSFYLIAFSLSQLPTII) form a helical membrane-spanning segment. At 269–369 (NSIQNFSDPD…KLIIDDYNRV (101 aa)) the chain is on the cytoplasmic side.

This sequence belongs to the G-protein coupled receptor 5 family.

It localises to the membrane. In terms of biological role, receptor for cAMP which may play a role in prestalk cell differentiation. May act as a negative regulator of cell growth. The sequence is that of Cyclic AMP receptor-like protein A (crlA) from Dictyostelium discoideum (Social amoeba).